Consider the following 511-residue polypeptide: DEP domain-containing protein 7 (511 aa).

The DEP domain maps to Leu46–Thr136.

The protein belongs to the DEPDC7 family.

The sequence is that of DEP domain-containing protein 7 (Depdc7) from Rattus norvegicus (Rat).